The sequence spans 178 residues: Deoxycytidylate deaminase (178 aa).

A CMP/dCMP-type deaminase domain is found at 14–145; sequence EWPEYFMAVA…DEATAARLLF (132 aa). His-84 provides a ligand contact to Zn(2+). The Proton donor role is filled by Glu-86. Cys-110 and Cys-113 together coordinate Zn(2+). Phosphoserine is present on Ser-174.

This sequence belongs to the cytidine and deoxycytidylate deaminase family. Homohexamer. It depends on Zn(2+) as a cofactor.

It catalyses the reaction dCMP + H2O + H(+) = dUMP + NH4(+). It carries out the reaction 5-hydroxymethyl-dCMP + H2O + H(+) = 5-hydroxymethyl-dUMP + NH4(+). With respect to regulation, allosteric enzyme whose activity is greatly influenced by the end products of its metabolic pathway, dCTP and dTTP. Its function is as follows. Catalyzes the deamination of dCMP to dUMP, providing the nucleoside monophosphate substrate for the thymidylate synthase/TYMS. Also, part of a nucleotide salvage pathway that eliminates epigenetically modified 5-hydroxymethyl-dCMP (hmdCMP) in a two-step process entailing deamination to cytotoxic 5-hydroxymethyl-dUMP (hmdUMP), followed by its hydrolysis into 5-hydroxymethyluracil (hmU) and 2-deoxy-D-ribose 5-phosphate (deoxyribosephosphate). Catalyzes the first step in that pathway, the deamination of 5-hydroxymethyl-dCMP (hmdCMP). The sequence is that of Deoxycytidylate deaminase from Homo sapiens (Human).